A 1351-amino-acid chain; its full sequence is Alpha-latrotoxin-Lh1a (1351 aa).

A signal peptide spans serine 1–arginine 7. Residues arginine 4–arginine 7 form a furin-like endopeptidase recognition region region. A helix H8 is the probable transmembrane region of the tetrameric pore inserted in the target cell membrane region spans residues valine 226–leucine 245. A disulfide bond links cysteine 401 and cysteine 1054. ANK repeat units follow at residues leucine 446 to glutamate 477, glutamine 478 to glutamine 509, lysine 513 to serine 542, phenylalanine 547 to glutamate 577, aspartate 581 to alanine 610, lysine 614 to alanine 644, asparagine 648 to valine 678, glycine 683 to valine 711, glycine 717 to glutamine 746, glutamate 750 to alanine 779, serine 783 to aspartate 812, asparagine 816 to isoleucine 846, asparagine 850 to threonine 879, threonine 883 to isoleucine 912, aspartate 916 to tryptophan 945, glutamate 959 to alanine 991, isoleucine 992 to valine 1019, lysine 1023 to histidine 1052, asparagine 1056 to arginine 1085, leucine 1089 to isoleucine 1119, aspartate 1125 to isoleucine 1154, and tyrosine 1158 to arginine 1187. Residues lysine 1184–arginine 1187 form a furin-like endopeptidase recognition region region. Positions glutamate 1188–serine 1351 are excised as a propeptide.

It belongs to the cationic peptide 01 (latrotoxin) family. 03 (alpha-latrotoxin) subfamily. Homotetramer in membranes. Post-translationally, processed by furin-like proteases at both the N- and C-termini. In terms of tissue distribution, expressed in venom gland, cephalothorax, and abdomen tissues from both males and females.

It is found in the secreted. The protein resides in the target cell membrane. In terms of biological role, presynaptic neurotoxin that causes massive release of neurotransmitters from vertebrate (but not invertebrate) nerve terminals and endocrine cells via a complex mechanism involving activation of receptor(s) and toxin insertion into the plasma membrane with subsequent pore formation. Binds to neurexin-1-alpha (NRXN1) in a calcium dependent manner, adhesion G protein-coupled receptor L1 (ADGRL1, also termed latrophilin-1 and calcium-independent receptor of latrotoxin (CIRL)), and receptor-type tyrosine-protein phosphatase S (PTPRS), also termed PTP sigma. NRXN1 and PTPRS are suggested to provide a platform for binding and subsequent pore formation events. In contrast, binding to ADGRL1 does not involve oligomerization and channel formation, but direct downstream stimulation of the synaptic fusion machinery. Induces rapid muscle contracture and loss of twitch tension when added to the isolated and indirectly stimulated chick biventer cervicis nerve-muscle preparation. This is Alpha-latrotoxin-Lh1a from Latrodectus hasselti (Redback spider).